A 74-amino-acid polypeptide reads, in one-letter code: Kappa-stichotoxin-Shd5a (74 aa).

Positions M1–A22 are cleaved as a signal peptide. Positions R23 to R39 are excised as a propeptide. The ShKT domain occupies C42–C74. 3 disulfide bridges follow: C42/C74, C51/C67, and C56/C71.

Belongs to the sea anemone type 1 potassium channel toxin family. Type 1a subfamily.

The protein resides in the secreted. It localises to the nematocyst. In terms of biological role, inhibits voltage-gated potassium channels (Kv) with higher potency for Kv1.1/KCNA1 and Kv1.3/KCNA3. The chain is Kappa-stichotoxin-Shd5a from Stichodactyla haddoni (Saddle carpet anemone).